An 806-amino-acid polypeptide reads, in one-letter code: Transitional endoplasmic reticulum ATPase (806 aa).

Ala-2 is subject to N-acetylalanine. A phosphoserine mark is found at Ser-3 and Ser-7. A Glycyl lysine isopeptide (Lys-Gly) (interchain with G-Cter in SUMO2) cross-link involves residue Lys-8. Ser-13 bears the Phosphoserine mark. Lys-18 participates in a covalent cross-link: Glycyl lysine isopeptide (Lys-Gly) (interchain with G-Cter in SUMO2). Ser-37 bears the Phosphoserine mark. 247–253 (PGTGKTL) provides a ligand contact to ATP. N6,N6,N6-trimethyllysine; by VCPKMT is present on Lys-315. Positions 348 and 384 each coordinate ATP. Thr-436 carries the post-translational modification Phosphothreonine. Ser-462 carries the post-translational modification Phosphoserine. N6-acetyllysine occurs at positions 502 and 505. 521 to 526 (GCGKTL) serves as a coordination point for ATP. Lys-668 carries the post-translational modification N6-acetyllysine; alternate. Residue Lys-668 is modified to N6-succinyllysine; alternate. Phosphoserine is present on Ser-702. Residues 708–727 (RRERERQTNPSAMEVEEDDP) are disordered. An N6-acetyllysine modification is found at Lys-754. A disordered region spans residues 768–806 (FGSFRFPSGNQGGAGPSQGSGGGTGGNVYTEDNDDDLYG). 3 positions are modified to phosphoserine: Ser-770, Ser-775, and Ser-787. Over residues 777–793 (NQGGAGPSQGSGGGTGG) the composition is skewed to gly residues. The tract at residues 797-806 (TEDNDDDLYG) is interaction with UBXN6. Residues 802–806 (DDLYG) carry the PIM motif motif. Residue Tyr-805 is modified to Phosphotyrosine.

It belongs to the AAA ATPase family. Homohexamer. Forms a ring-shaped particle of 12.5 nm diameter, that displays 6-fold radial symmetry. Interacts with NSFL1C-like protein p37; the complex has membrane fusion activity and is required for Golgi and endoplasmic reticulum biogenesis. Interacts with RHBDD1 (via C-terminal domain). Interacts with SELENOS and SYVN1, as well as with DERL1 (via SHP-box motif), DERL2 and DERL3; which probably transfer misfolded proteins from the ER to VCP. Interacts with SVIP and DERL1. Component of a complex required to couple retrotranslocation, ubiquitination and deglycosylation composed of NGLY1, SAKS1, AMFR, VCP and RAD23B. Part of a complex composed of STUB1/CHIP, VCP/p97, CHRNA3, and UBXN2A that modulates the ubiquitination and endoplasmic reticulum-associated degradation (ERAD) of CHRNA3. Within the complex UBXN2A acts as a scaffold protein required for the interaction of CHRNA3 with VCP/p97, this interaction also inhibits CHRNA3 ubiquitination by STUB1/CHIP and subsequently ERAD. Interacts with UBXN2A (via UBX domain); the interaction is required for the interaction of CHRNA3 in the STUB1-VCP-UBXN2A complex. Directly interacts with UBXN4 and RNF19A. Interacts with CASR. Interacts with UBE4B and YOD1. Interacts with clathrin. Interacts with RNF103. Interacts with TRIM13 and TRIM21. Component of a VCP/p97-AMFR/gp78 complex that participates in the final step of the endoplasmic reticulum-associated degradation (ERAD) of HMGCR. Interacts directly with AMFR/gp78 (via its VIM). Interacts with SPRTN; leading to recruitment to stalled replication forks. Part of a ternary complex containing STX5A, NSFL1C and VCP. NSFL1C forms a homotrimer that binds to one end of a VCP homohexamer. The complex binds to membranes enriched in phosphatidylethanolamine-containing lipids and promotes Golgi membrane fusion. Binds to a heterodimer of NPLOC4 and UFD1, binding to this heterodimer inhibits Golgi-membrane fusion. Interaction with VCIP135 leads to dissociation of the complex via ATP hydrolysis by VCP. Part of a ternary complex containing NPLOC4, UFD1 and VCP. Interacts with WASHC5. Interacts with UBOX5. Interacts (via N-terminus) with UBXN7, UBXN8, and probably several other UBX domain-containing proteins (via UBX domains); the interactions are mutually exclusive with VIM-dependent interactions such as those with AMFR and SELENOS. Forms a complex with UBQLN1 and UBXN4. Interacts (via the PIM motif) with RNF31 (via the PUB domain). Interacts with RIGI and RNF125; interaction takes place when RIGI is ubiquitinated via 'Lys-63'-linked ubiquitin on its CARD domains, leading to recruit RNF125 and promote ubiquitination and degradation of RIGI. Interacts with BAG6. Interacts with UBXN10. Interacts with UBXN6; the interaction with UBXN6 is direct and competitive with UFD1. Forms a ternary complex with CAV1 and UBXN6. Interacts with PLAA, UBXN6 and YOD1; may form a complex involved in macroautophagy. Interacts with ANKZF1. Interacts with ubiquitin-binding protein FAF1. Interacts with ZFAND2B (via VIM motif); the interaction is direct. Interacts with ZFAND1 (via its ubiquitin-like region); this interaction occurs in an arsenite-dependent manner. Interacts with CCDC47. Interacts with LMBR1L and UBAC2. Interacts with ATXN3. Interacts with TEX264; bridging VCP to covalent DNA-protein cross-links (DPCs). Post-translationally, phosphorylated by tyrosine kinases in response to T-cell antigen receptor activation. Phosphorylated in mitotic cells. ISGylated. In terms of processing, methylation at Lys-315 catalyzed by VCPKMT is increased in the presence of ASPSCR1. Lys-315 methylation may decrease ATPase activity.

Its subcellular location is the cytoplasm. It localises to the cytosol. It is found in the endoplasmic reticulum. The protein resides in the nucleus. The protein localises to the stress granule. The catalysed reaction is ATP + H2O = ADP + phosphate + H(+). Functionally, necessary for the fragmentation of Golgi stacks during mitosis and for their reassembly after mitosis. Involved in the formation of the transitional endoplasmic reticulum (tER). The transfer of membranes from the endoplasmic reticulum to the Golgi apparatus occurs via 50-70 nm transition vesicles which derive from part-rough, part-smooth transitional elements of the endoplasmic reticulum (tER). Vesicle budding from the tER is an ATP-dependent process. The ternary complex containing UFD1, VCP and NPLOC4 binds ubiquitinated proteins and is necessary for the export of misfolded proteins from the ER to the cytoplasm, where they are degraded by the proteasome. The NPLOC4-UFD1-VCP complex regulates spindle disassembly at the end of mitosis and is necessary for the formation of a closed nuclear envelope. Regulates E3 ubiquitin-protein ligase activity of RNF19A. Component of the VCP/p97-AMFR/gp78 complex that participates in the final step of the sterol-mediated ubiquitination and endoplasmic reticulum-associated degradation (ERAD) of HMGCR. Mediates the endoplasmic reticulum-associated degradation of CHRNA3 in cortical neurons as part of the STUB1-VCP-UBXN2A complex. Involved in endoplasmic reticulum stress-induced pre-emptive quality control, a mechanism that selectively attenuates the translocation of newly synthesized proteins into the endoplasmic reticulum and reroutes them to the cytosol for proteasomal degradation. Involved in clearance process by mediating G3BP1 extraction from stress granules. Also involved in DNA damage response: recruited to double-strand breaks (DSBs) sites in a RNF8- and RNF168-dependent manner and promotes the recruitment of TP53BP1 at DNA damage sites. Recruited to stalled replication forks by SPRTN: may act by mediating extraction of DNA polymerase eta (POLH) to prevent excessive translesion DNA synthesis and limit the incidence of mutations induced by DNA damage. Together with SPRTN metalloprotease, involved in the repair of covalent DNA-protein cross-links (DPCs) during DNA synthesis. Involved in interstrand cross-link repair in response to replication stress by mediating unloading of the ubiquitinated CMG helicase complex. Mediates extraction of PARP1 trapped to chromatin: recognizes and binds ubiquitinated PARP1 and promotes its removal. Required for cytoplasmic retrotranslocation of stressed/damaged mitochondrial outer-membrane proteins and their subsequent proteasomal degradation. Essential for the maturation of ubiquitin-containing autophagosomes and the clearance of ubiquitinated protein by autophagy. Acts as a negative regulator of type I interferon production by interacting with RIGI: interaction takes place when RIGI is ubiquitinated via 'Lys-63'-linked ubiquitin on its CARD domains, leading to recruit RNF125 and promote ubiquitination and degradation of RIGI. May play a role in the ubiquitin-dependent sorting of membrane proteins to lysosomes where they undergo degradation. May more particularly play a role in caveolins sorting in cells. By controlling the steady-state expression of the IGF1R receptor, indirectly regulates the insulin-like growth factor receptor signaling pathway. This is Transitional endoplasmic reticulum ATPase (Vcp) from Rattus norvegicus (Rat).